The primary structure comprises 45 residues: Major cold shock protein (45 aa).

The CSD domain maps to 1-45 (EKGFGFISTENGQDVFAHFSAIQTNGFKTLEEGQKVEFDVEEGQR).

Homodimer.

The protein resides in the cytoplasm. This is Major cold shock protein (cspA) from Streptococcus dysgalactiae.